A 264-amino-acid polypeptide reads, in one-letter code: Phosphonoacetaldehyde hydrolase (264 aa).

D9 (nucleophile) is an active-site residue. The Mg(2+) site is built by D9 and A11. K50 (schiff-base intermediate with substrate) is an active-site residue. D183 is a binding site for Mg(2+).

Belongs to the HAD-like hydrolase superfamily. PhnX family. Homodimer. Requires Mg(2+) as cofactor.

The catalysed reaction is phosphonoacetaldehyde + H2O = acetaldehyde + phosphate + H(+). Functionally, involved in phosphonate degradation. The protein is Phosphonoacetaldehyde hydrolase of Bacillus cereus (strain B4264).